A 317-amino-acid chain; its full sequence is Membrane-associated protein VIPP1, chloroplastic (317 aa).

The stretch at 92–246 (EMNDDLTKMR…SQAEALGQLA (155 aa)) forms a coiled coil. The segment at 265–317 (DLAQMKKEISGSSSKGELPPGRTAVSNSGAARPFRDIEIENELNELRKKANEY) is disordered. Positions 297-317 (PFRDIEIENELNELRKKANEY) are enriched in basic and acidic residues.

It belongs to the PspA/Vipp/IM30 family. In terms of assembly, homomultimer. Complex formation involves interaction via the central alpha-helical domain (71-286). As to quaternary structure, (Microbial infection) Interacts with the rice tungro bacilliform virus (RTBV) capsid protein.

Its subcellular location is the plastid. The protein resides in the chloroplast inner membrane. It localises to the chloroplast thylakoid membrane. Functionally, required for plastid vesicle formation and thylakoid membrane biogenesis, but not for functional assembly of thylakoid protein complexes. The chain is Membrane-associated protein VIPP1, chloroplastic from Oryza sativa subsp. japonica (Rice).